The primary structure comprises 520 residues: Zinc finger and BTB domain-containing protein 18 (520 aa).

The BTB domain occupies Cys-24–Gly-91. Residues Ala-121–Glu-140 form a disordered region. 4 C2H2-type zinc fingers span residues Phe-368–His-390, Pro-408–His-430, Tyr-436–His-458, and His-464–His-487.

Belongs to the krueppel C2H2-type zinc-finger protein family. ZBTB18 subfamily.

The protein resides in the nucleus. Its function is as follows. Transcriptional repressor that plays a role in various developmental processes. Specifically binds the consensus DNA sequence 5'-[AC]ACATCTG[GT][AC]-3' which contains the E box core, and acts by recruiting chromatin remodeling multiprotein complexes. This is Zinc finger and BTB domain-containing protein 18 (zbtb18) from Xenopus laevis (African clawed frog).